A 956-amino-acid polypeptide reads, in one-letter code: Glutamate receptor ionotropic, kainate 4 (956 aa).

The signal sequence occupies residues 1-20; it reads MPRVSAPLVLLPAWLLMVAC. The Extracellular segment spans residues 21 to 545; it reads SPHSLRIAAI…YFSFLDPFSP (525 aa). Residues N158, N220, N272, N286, N323, N408, N415, and N479 are each glycosylated (N-linked (GlcNAc...) asparagine). Residues G500, T502, and R507 each coordinate L-glutamate. The chain crosses the membrane as a helical span at residues 546-566; it reads GVWLFMLLAYLAVSCVLFLVA. Topologically, residues 567-623 are cytoplasmic; that stretch reads RLTPYEWYSPHPCAQGRCNLLVNQYSLGNSLWFPVGGFMQQGSTIAPRALSTRCVSG. Residues 624-644 traverse the membrane as a helical segment; it reads VWWAFTLIIISSYTANLAAFL. At 645–804 the chain is on the extracellular side; it reads TVQRMEVPIE…HRAKGLGMEN (160 aa). Residues S674, S675, and E723 each contribute to the L-glutamate site. An N-linked (GlcNAc...) asparagine glycan is attached at N736. Residues 805-825 form a helical membrane-spanning segment; it reads IGGIFVVLICGLIVAIFMAML. The Cytoplasmic portion of the chain corresponds to 826 to 956; that stretch reads EFLWTLRHSE…DKTTNSSEPE (131 aa). The segment at 931–956 is disordered; that stretch reads LRARPSPARSEESLEWDKTTNSSEPE. Residues 939-948 show a composition bias toward basic and acidic residues; that stretch reads RSEESLEWDK.

Belongs to the glutamate-gated ion channel (TC 1.A.10.1) family. GRIK4 subfamily. In terms of assembly, homodimer. Can form functional heteromeric receptors with GRIK1, GRIK2 and GRIK3 subunits. Forms a heteromeric complex with GRIK2. Expressed in the hippocampus and cerebellum (at protein level).

The protein localises to the cell membrane. It localises to the postsynaptic cell membrane. The protein resides in the presynaptic cell membrane. Functionally, ionotropic glutamate receptor that functions as a cation-permeable ligand-gated ion channel. Cannot form functional channels on its own and produces channel activity only in heteromeric assembly with GRIK1, GRIK2 and GRIK3 subunits. The chain is Glutamate receptor ionotropic, kainate 4 (Grik4) from Mus musculus (Mouse).